A 454-amino-acid polypeptide reads, in one-letter code: Probable diacyglycerol O-acyltransferase tgs2 (454 aa).

The Proton acceptor role is filled by His-139.

It belongs to the long-chain O-acyltransferase family.

The catalysed reaction is an acyl-CoA + a 1,2-diacyl-sn-glycerol = a triacyl-sn-glycerol + CoA. It carries out the reaction a long chain fatty alcohol + a fatty acyl-CoA = a wax ester + CoA. It functions in the pathway glycerolipid metabolism; triacylglycerol biosynthesis. Catalyzes the terminal and only committed step in triacylglycerol synthesis by using diacylglycerol and fatty acyl CoA as substrates. Required for storage lipid synthesis. This chain is Probable diacyglycerol O-acyltransferase tgs2 (tgs2), found in Mycobacterium tuberculosis (strain CDC 1551 / Oshkosh).